We begin with the raw amino-acid sequence, 217 residues long: Oxygen regulatory protein NreC (217 aa).

The 118-residue stretch at 2 to 119 folds into the Response regulatory domain; the sequence is KIVIADDHAV…QLLLAIRTVY (118 aa). The residue at position 53 (Asp53) is a 4-aspartylphosphate. The region spanning 148 to 213 is the HTH luxR-type domain; it reads TTDPFKILSK…ELVEYALKKK (66 aa). Residues 172 to 191 constitute a DNA-binding region (H-T-H motif); the sequence is NKEIAEKLFVSVKTVEAHKT.

Post-translationally, phosphorylated by NreB.

It localises to the cytoplasm. Functionally, member of the two-component regulatory system NreB/NreC involved in the control of dissimilatory nitrate/nitrite reduction in response to oxygen. Phosphorylated NreC binds to a GC-rich palindromic sequence at the promoters of the nitrate (narGHJI) and nitrite (nir) reductase operons, as well as the putative nitrate transporter gene narT, and activates their expression. The polypeptide is Oxygen regulatory protein NreC (nreC) (Staphylococcus aureus (strain USA300 / TCH1516)).